We begin with the raw amino-acid sequence, 85 residues long: Sec-independent protein translocase protein TatA (85 aa).

The helical transmembrane segment at 1-21 (MGIFDWKHWLIILIVVVLVFG) threads the bilayer. A disordered region spans residues 43 to 85 (VNTEEGENRPAEPQTGTSAGDTLNKTQTIEGQAQKVDTPVRKD). Residues 56–73 (QTGTSAGDTLNKTQTIEG) are compositionally biased toward polar residues.

This sequence belongs to the TatA/E family. As to quaternary structure, the Tat system comprises two distinct complexes: a TatABC complex, containing multiple copies of TatA, TatB and TatC subunits, and a separate TatA complex, containing only TatA subunits. Substrates initially bind to the TatABC complex, which probably triggers association of the separate TatA complex to form the active translocon.

The protein resides in the cell inner membrane. Its function is as follows. Part of the twin-arginine translocation (Tat) system that transports large folded proteins containing a characteristic twin-arginine motif in their signal peptide across membranes. TatA could form the protein-conducting channel of the Tat system. This chain is Sec-independent protein translocase protein TatA, found in Azotobacter vinelandii (strain DJ / ATCC BAA-1303).